Here is a 522-residue protein sequence, read N- to C-terminus: GMP synthase [glutamine-hydrolyzing] (522 aa).

A Glutamine amidotransferase type-1 domain is found at K9 to L204. C86 functions as the Nucleophile in the catalytic mechanism. Residues H178 and E180 contribute to the active site. The GMPS ATP-PPase domain maps to W205 to R397. S232–S238 provides a ligand contact to ATP.

Homodimer.

It carries out the reaction XMP + L-glutamine + ATP + H2O = GMP + L-glutamate + AMP + diphosphate + 2 H(+). Its pathway is purine metabolism; GMP biosynthesis; GMP from XMP (L-Gln route): step 1/1. Functionally, catalyzes the synthesis of GMP from XMP. This chain is GMP synthase [glutamine-hydrolyzing] (guaA), found in Xylella fastidiosa (strain 9a5c).